The following is an 860-amino-acid chain: Alanine--tRNA ligase (860 aa).

4 residues coordinate Zn(2+): His563, His567, Cys665, and His669.

This sequence belongs to the class-II aminoacyl-tRNA synthetase family. It depends on Zn(2+) as a cofactor.

Its subcellular location is the cytoplasm. It catalyses the reaction tRNA(Ala) + L-alanine + ATP = L-alanyl-tRNA(Ala) + AMP + diphosphate. Catalyzes the attachment of alanine to tRNA(Ala) in a two-step reaction: alanine is first activated by ATP to form Ala-AMP and then transferred to the acceptor end of tRNA(Ala). Also edits incorrectly charged Ser-tRNA(Ala) and Gly-tRNA(Ala) via its editing domain. This is Alanine--tRNA ligase from Vibrio parahaemolyticus serotype O3:K6 (strain RIMD 2210633).